Reading from the N-terminus, the 263-residue chain is Neurovirulence factor ICP34.5 (263 aa).

The span at 1 to 14 (MARRRRHRGPRRPR) shows a compositional bias: basic residues. A required for nucleolar localization region spans residues 1–16 (MARRRRHRGPRRPRPP). Disordered regions lie at residues 1–128 (MARR…PFRL) and 149–190 (RRAG…PATP). Residues 24–35 (TAQSQVTSTPNS) show a composition bias toward polar residues. The segment covering 45 to 58 (AAPPPPPASGPPPS) has biased composition (pro residues). Residues 73–83 (ASDDDDDDDWP) are compositionally biased toward acidic residues. Pro residues-rich tracts occupy residues 84 to 93 (DSPPPEPAPE) and 119 to 128 (SHPPSRPFRL). Residues 128–137 (LPPRLALRLR) carry the Nuclear export signal motif. Repeat copies occupy residues 161-163 (ATP), 164-166 (ATP), 167-169 (ATP), 170-172 (ATP), 173-175 (ATP), 176-178 (ATP), 179-181 (ATP), 182-184 (ATP), 185-187 (ATP), and 188-190 (ATP). The tract at residues 161–190 (ATPATPATPATPATPATPATPATPATPATP) is 10 X 3 AA tandem repeats of A-T-P. A compositionally biased stretch (low complexity) spans 164–190 (ATPATPATPATPATPATPATPATPATP). The tract at residues 190-203 (PARVRFSPHVRVRH) is interaction with host PPP1CA. The segment at 205–263 (VVWASAARLARRGSWARERADRARFRRRVAEAEAVIGPCLGPEARARALARGAGPANSV) is important for interferon resistance. The short motif at 215–233 (RRGSWARERADRARFRRRV) is the Bipartite nuclear localization signal element. The interaction with host EIF2S1/EIF-2ALPHA stretch occupies residues 233–248 (VAEAEAVIGPCLGPEA).

Belongs to the PPP1R15 family. As to quaternary structure, interacts with host PPP1CA; this interaction to forms a high-molecular-weight complex that dephosphorylates EIF2S1/eIF-2alpha. Interacts with host EIF2S1/eIF-2alpha; this interaction is crucial for the specific dephosphorylation of EIF2S1/eIF-2alpha by PPP1CA. Binds to proliferating cell nuclear antigen (PCNA), which may release host cells from growth arrest and facilitate viral replication. Interacts (via N-terminus) with host C1QBP; this interaction allows C1QBP to be recruited to the inner nuclear membrane by ICP34.5. Interacts with host PRKCA. Interacts with protein UL31. Interacts with host STING/TMEM173; this interaction inhibits the intracellular DNA sensing pathway. Interacts with host BECN1; this interaction modulates host autophagy.

It localises to the host cytoplasm. The protein resides in the host nucleus. It is found in the host nucleolus. The protein localises to the virion. Functionally, inhibits the establishment of the immune response and of the integrated stress response (ISR) in the infected cell. Plays essential roles in viral nuclear egress to mediate capsid transit across the nuclear membrane. Facilitates nuclear egress cooperatively with host C1QBP and protein kinase C/PKC to induce lamin A/C phosphorylation and subsequent reorganization. In turn, lamina disassembles and nuclear egress occurs. Recruits the serine/threonine protein phosphatase PPP1CA/PP1-alpha to dephosphorylate the translation initiation factor EIF2S1/eIF-2alpha, thereby couteracting the host shutoff of protein synthesis involving double-stranded RNA-dependent protein kinase EIF2AK2/PKR. In turn, controls host IRF3 activation and subsequently inhibits host interferon response. Controls the DNA sensing pathway by interacting with and inhibiting host STING/TMEM173. Also down-modulates the host MHC class II proteins cell surface expression. Acts as a neurovirulence factor that has a profound effect on the growth of the virus in central nervous system tissue, by interacting with host BECN1 and thereby antagonizing the host autophagy response. This chain is Neurovirulence factor ICP34.5 (RL1), found in Human herpesvirus 1 (strain F) (HHV-1).